Consider the following 266-residue polypeptide: Small ribosomal subunit protein eS1 (266 aa).

Residues 236 to 266 (GAGTAAKATGDDTGAKVERADGYEPPIQESV) are disordered. Basic and acidic residues predominate over residues 244-257 (TGDDTGAKVERADG).

This sequence belongs to the eukaryotic ribosomal protein eS1 family. In terms of assembly, component of the small ribosomal subunit. Mature ribosomes consist of a small (40S) and a large (60S) subunit. The 40S subunit contains about 33 different proteins and 1 molecule of RNA (18S). The 60S subunit contains about 49 different proteins and 3 molecules of RNA (28S, 5.8S and 5S). Part of the small subunit (SSU) processome, composed of more than 70 proteins and the RNA chaperone small nucleolar RNA (snoRNA) U3.

The protein resides in the cytoplasm. It localises to the nucleus. The protein localises to the nucleolus. Component of the small ribosomal subunit. The ribosome is a large ribonucleoprotein complex responsible for the synthesis of proteins in the cell. Part of the small subunit (SSU) processome, first precursor of the small eukaryotic ribosomal subunit. During the assembly of the SSU processome in the nucleolus, many ribosome biogenesis factors, an RNA chaperone and ribosomal proteins associate with the nascent pre-rRNA and work in concert to generate RNA folding, modifications, rearrangements and cleavage as well as targeted degradation of pre-ribosomal RNA by the RNA exosome. May play a role during erythropoiesis. The polypeptide is Small ribosomal subunit protein eS1 (rps3a) (Tetraodon nigroviridis (Spotted green pufferfish)).